We begin with the raw amino-acid sequence, 416 residues long: Multifunctional CCA protein (416 aa).

ATP is bound by residues glycine 8 and arginine 11. CTP contacts are provided by glycine 8 and arginine 11. Residues aspartate 21 and aspartate 23 each contribute to the Mg(2+) site. Residues arginine 91, arginine 137, and arginine 140 each coordinate ATP. The CTP site is built by arginine 91, arginine 137, and arginine 140. The HD domain occupies 228–329 (TGVHTLMVLA…VKIFDKADFW (102 aa)).

This sequence belongs to the tRNA nucleotidyltransferase/poly(A) polymerase family. Bacterial CCA-adding enzyme type 1 subfamily. Monomer. Can also form homodimers and oligomers. Requires Mg(2+) as cofactor. Ni(2+) is required as a cofactor.

It carries out the reaction a tRNA precursor + 2 CTP + ATP = a tRNA with a 3' CCA end + 3 diphosphate. The enzyme catalyses a tRNA with a 3' CCA end + 2 CTP + ATP = a tRNA with a 3' CCACCA end + 3 diphosphate. Catalyzes the addition and repair of the essential 3'-terminal CCA sequence in tRNAs without using a nucleic acid template. Adds these three nucleotides in the order of C, C, and A to the tRNA nucleotide-73, using CTP and ATP as substrates and producing inorganic pyrophosphate. tRNA 3'-terminal CCA addition is required both for tRNA processing and repair. Also involved in tRNA surveillance by mediating tandem CCA addition to generate a CCACCA at the 3' terminus of unstable tRNAs. While stable tRNAs receive only 3'-terminal CCA, unstable tRNAs are marked with CCACCA and rapidly degraded. The sequence is that of Multifunctional CCA protein from Shewanella baltica (strain OS223).